The following is a 300-amino-acid chain: Ribosomal protein bS6--L-glutamate ligase (300 aa).

Positions 104-287 (MQLLARQGID…IASKMIRWIE (184 aa)) constitute an ATP-grasp domain. ATP contacts are provided by residues K141, 178 to 179 (EY), D187, and 211 to 213 (RSN). Residues D248, E260, and N262 each coordinate Mg(2+). D248, E260, and N262 together coordinate Mn(2+).

This sequence belongs to the RimK family. Mg(2+) serves as cofactor. Mn(2+) is required as a cofactor.

An L-glutamate ligase that catalyzes the ATP-dependent post-translational addition of glutamate residues to the C-terminus of ribosomal protein bS6 (RpsF). Is also able to catalyze the synthesis of poly-alpha-glutamate in vitro, via ATP hydrolysis from unprotected glutamate as substrate. The number of glutamate residues added to either RpsF or to poly-alpha-glutamate changes with pH. The chain is Ribosomal protein bS6--L-glutamate ligase from Escherichia coli O81 (strain ED1a).